The chain runs to 212 residues: Pyridoxine/pyridoxamine 5'-phosphate oxidase (212 aa).

Substrate is bound by residues 8–11 (RREY) and lysine 66. Residues 61–66 (RIVLLK), 76–77 (FT), arginine 82, lysine 83, and glutamine 105 each bind FMN. The substrate site is built by tyrosine 123, arginine 127, and serine 131. Residues 140-141 (QS) and tryptophan 185 each bind FMN. 191 to 193 (RLH) lines the substrate pocket. An FMN-binding site is contributed by arginine 195.

This sequence belongs to the pyridoxamine 5'-phosphate oxidase family. Homodimer. The cofactor is FMN.

It catalyses the reaction pyridoxamine 5'-phosphate + O2 + H2O = pyridoxal 5'-phosphate + H2O2 + NH4(+). It carries out the reaction pyridoxine 5'-phosphate + O2 = pyridoxal 5'-phosphate + H2O2. The protein operates within cofactor metabolism; pyridoxal 5'-phosphate salvage; pyridoxal 5'-phosphate from pyridoxamine 5'-phosphate: step 1/1. Its pathway is cofactor metabolism; pyridoxal 5'-phosphate salvage; pyridoxal 5'-phosphate from pyridoxine 5'-phosphate: step 1/1. Its function is as follows. Catalyzes the oxidation of either pyridoxine 5'-phosphate (PNP) or pyridoxamine 5'-phosphate (PMP) into pyridoxal 5'-phosphate (PLP). This is Pyridoxine/pyridoxamine 5'-phosphate oxidase from Shewanella halifaxensis (strain HAW-EB4).